The chain runs to 374 residues: Zinc finger CCCH domain-containing protein 15 homolog (374 aa).

Residues 1 to 20 (MPPKQQGPSKKSEQKRKEKV) form a disordered region. Basic and acidic residues predominate over residues 10–20 (KKSEQKRKEKV). 2 consecutive C3H1-type zinc fingers follow at residues 90–117 (DPKS…HDLA) and 166–199 (VCKY…HCLP).

The protein belongs to the ZC3H15/TMA46 family.

The protein is Zinc finger CCCH domain-containing protein 15 homolog of Caenorhabditis elegans.